Here is a 454-residue protein sequence, read N- to C-terminus: DNA-binding protein (454 aa).

Residues 1–41 form a disordered region; it reads MSHKKVVAISESSSDEEVPVAPPTAPPKKRQRKAVEEPRGH. Position 129 is a phosphotyrosine; by host (tyrosine 129). Residues cysteine 213 and histidine 215 each contribute to the Zn(2+) site. A flexible loop region spans residues 226 to 260; the sequence is VEMDVNSENAQRALKENPEKTKIVSNRWGRNVVQF. The Zn(2+) site is built by cysteine 268, cysteine 284, cysteine 325, cysteine 327, cysteine 378, and cysteine 394. The tract at residues 440-454 is C-terminal arm, DBP binding; that stretch reads TILPQGQHDDDLVLF.

It belongs to the adenoviridae E2A DNA-binding protein family. Homomultimerizes on viral ssDNA bound to pTP. Forms a initiation complex with viral polymerase, pTP and hosts NFIA and POU2F1/OCT1. Interacts with host SRCAP.

Its subcellular location is the host nucleus. Its function is as follows. Plays a role in the elongation phase of viral strand displacement replication by unwinding the template in an ATP-independent fashion, employing its capacity to form multimers. Also enhances the rate of initiation. Released from template upon second strand synthesis. Assembles in complex with viral pTP, viral pol, host NFIA and host POU2F1/OCT1 on viral origin of replication. Covers the whole ssDNA genome during synthesis. The complementary strand synthesis induces its relese from DNA template. May inhibit cellular transcription mediated by the interaction between host SRCAP and CBP. This chain is DNA-binding protein, found in Canine adenovirus serotype 1 (strain CLL) (CAdV-1).